The sequence spans 308 residues: Transaldolase (308 aa).

Residue Lys125 is the Schiff-base intermediate with substrate of the active site.

It belongs to the transaldolase family. Type 1 subfamily. Homodimer.

The protein localises to the cytoplasm. It catalyses the reaction D-sedoheptulose 7-phosphate + D-glyceraldehyde 3-phosphate = D-erythrose 4-phosphate + beta-D-fructose 6-phosphate. It participates in carbohydrate degradation; pentose phosphate pathway; D-glyceraldehyde 3-phosphate and beta-D-fructose 6-phosphate from D-ribose 5-phosphate and D-xylulose 5-phosphate (non-oxidative stage): step 2/3. Transaldolase is important for the balance of metabolites in the pentose-phosphate pathway. This chain is Transaldolase, found in Pseudomonas fluorescens (strain ATCC BAA-477 / NRRL B-23932 / Pf-5).